Reading from the N-terminus, the 402-residue chain is Baeyer-Villiger oxidase notM (402 aa).

It belongs to the questin oxidase family.

Its function is as follows. Baeyer-Villiger oxidase; part of the gene cluster that mediates the biosynthesis of notoamide, a fungal indole alkaloid that belongs to a family of natural products containing a characteristic bicyclo[2.2.2]diazaoctane core. The first step of notoamide biosynthesis involves coupling of L-proline and L-tryptophan by the bimodular NRPS notE, to produce cyclo-L-tryptophan-L-proline called brevianamide F. The reverse prenyltransferase notF then acts as a deoxybrevianamide E synthase and converts brevianamide F to deoxybrevianamide E via reverse prenylation at C-2 of the indole ring leading to the bicyclo[2.2.2]diazaoctane core. Deoxybrevianamide E is further hydroxylated at C-6 of the indole ring, likely catalyzed by the cytochrome P450 monooxygenase notG, to yield 6-hydroxy-deoxybrevianamide E. 6-hydroxy-deoxybrevianamide E is a specific substrate of the prenyltransferase notC for normal prenylation at C-7 to produce 6-hydroxy-7-prenyl-deoxybrevianamide, also called notoamide S. As the proposed pivotal branching point in notoamide biosynthesis, notoamide S can be diverted to notoamide E through an oxidative pyran ring closure putatively catalyzed by either notH cytochrome P450 monooxygenase or the notD FAD-linked oxidoreductase. This step would be followed by an indole 2,3-epoxidation-initiated pinacol-like rearrangement catalyzed by the notB FAD-dependent monooxygenase leading to the formation of notoamide C and notoamide D. On the other hand notoamide S is converted to notoamide T by notH (or notD), a bifunctional oxidase that also functions as the intramolecular Diels-Alderase responsible for generation of (+)-notoamide T. To generate antipodal (-)-notoaminide T, notH' (or notD') in Aspergillus versicolor is expected to catalyze a Diels-Alder reaction leading to the opposite stereochemistry. The remaining oxidoreductase notD (or notH) likely catalyzes the oxidative pyran ring formation to yield (+)-stephacidin A. The FAD-dependent monooxygenase notI is highly similar to notB and is predicted to catalyze a similar conversion from (+)-stephacidin A to (-)-notoamide B via the 2,3-epoxidation of (+)-stephacidin A followed by a pinacol-type rearrangement. Finally, it remains unclear which enzyme could be responsible for the final hydroxylation steps leading to notoamide A and sclerotiamide. The function of notM in the notoamide biosynthesis has not been determined yet. In Aspergillus sp. (strain MF297-2), this protein is Baeyer-Villiger oxidase notM.